We begin with the raw amino-acid sequence, 73 residues long: Sec-independent protein translocase protein TatA (73 aa).

The chain crosses the membrane as a helical span at residues 1-21 (MGSFSIWHWVIVLVVVVLIFG). Residues 43–73 (MKSEGEDAAQTPPAAQKEGGRVIDAEPADKK) form a disordered region. A compositionally biased stretch (basic and acidic residues) spans 60-73 (EGGRVIDAEPADKK).

Belongs to the TatA/E family. In terms of assembly, the Tat system comprises two distinct complexes: a TatABC complex, containing multiple copies of TatA, TatB and TatC subunits, and a separate TatA complex, containing only TatA subunits. Substrates initially bind to the TatABC complex, which probably triggers association of the separate TatA complex to form the active translocon.

Its subcellular location is the cell inner membrane. In terms of biological role, part of the twin-arginine translocation (Tat) system that transports large folded proteins containing a characteristic twin-arginine motif in their signal peptide across membranes. TatA could form the protein-conducting channel of the Tat system. This is Sec-independent protein translocase protein TatA from Laribacter hongkongensis (strain HLHK9).